The chain runs to 245 residues: Probable proteasome subunit alpha type-2 (245 aa).

It belongs to the peptidase T1A family. The 26S proteasome consists of a 20S proteasome core and two 19S regulatory subunits. The 20S proteasome core is composed of 28 subunits that are arranged in four stacked rings, resulting in a barrel-shaped structure. The two end rings are each formed by seven alpha subunits, and the two central rings are each formed by seven beta subunits. The catalytic chamber with the active sites is on the inside of the barrel.

It localises to the cytoplasm. Its subcellular location is the nucleus. Functionally, the proteasome is a multicatalytic proteinase complex which is characterized by its ability to cleave peptides with Arg, Phe, Tyr, Leu, and Glu adjacent to the leaving group at neutral or slightly basic pH. The proteasome has an ATP-dependent proteolytic activity. The protein is Probable proteasome subunit alpha type-2 (pre8) of Schizosaccharomyces pombe (strain 972 / ATCC 24843) (Fission yeast).